The sequence spans 367 residues: Aminomethyltransferase (367 aa).

It belongs to the GcvT family. In terms of assembly, the glycine cleavage system is composed of four proteins: P, T, L and H.

It carries out the reaction N(6)-[(R)-S(8)-aminomethyldihydrolipoyl]-L-lysyl-[protein] + (6S)-5,6,7,8-tetrahydrofolate = N(6)-[(R)-dihydrolipoyl]-L-lysyl-[protein] + (6R)-5,10-methylene-5,6,7,8-tetrahydrofolate + NH4(+). In terms of biological role, the glycine cleavage system catalyzes the degradation of glycine. The polypeptide is Aminomethyltransferase (Mycolicibacterium paratuberculosis (strain ATCC BAA-968 / K-10) (Mycobacterium paratuberculosis)).